The chain runs to 95 residues: Aspartyl/glutamyl-tRNA(Asn/Gln) amidotransferase subunit C (95 aa).

Belongs to the GatC family. In terms of assembly, heterotrimer of A, B and C subunits.

It catalyses the reaction L-glutamyl-tRNA(Gln) + L-glutamine + ATP + H2O = L-glutaminyl-tRNA(Gln) + L-glutamate + ADP + phosphate + H(+). The catalysed reaction is L-aspartyl-tRNA(Asn) + L-glutamine + ATP + H2O = L-asparaginyl-tRNA(Asn) + L-glutamate + ADP + phosphate + 2 H(+). In terms of biological role, allows the formation of correctly charged Asn-tRNA(Asn) or Gln-tRNA(Gln) through the transamidation of misacylated Asp-tRNA(Asn) or Glu-tRNA(Gln) in organisms which lack either or both of asparaginyl-tRNA or glutaminyl-tRNA synthetases. The reaction takes place in the presence of glutamine and ATP through an activated phospho-Asp-tRNA(Asn) or phospho-Glu-tRNA(Gln). In Nitrosococcus oceani (strain ATCC 19707 / BCRC 17464 / JCM 30415 / NCIMB 11848 / C-107), this protein is Aspartyl/glutamyl-tRNA(Asn/Gln) amidotransferase subunit C.